Consider the following 621-residue polypeptide: Glutamine--fructose-6-phosphate aminotransferase [isomerizing] (621 aa).

The active-site Nucleophile; for GATase activity is the C2. The Glutamine amidotransferase type-2 domain occupies 2–223 (CGIIGYVGEG…DRELGIISIS (222 aa)). 2 consecutive SIS domains span residues 289–436 (LHLE…HKFT) and 470–611 (LSKQ…IDKP). The active-site For Fru-6P isomerization activity is the K616.

As to quaternary structure, homodimer.

The protein resides in the plastid. Its subcellular location is the chloroplast. It carries out the reaction D-fructose 6-phosphate + L-glutamine = D-glucosamine 6-phosphate + L-glutamate. Catalyzes the first step in hexosamine metabolism, converting fructose-6P into glucosamine-6P using glutamine as a nitrogen source. This Cyanidium caldarium (Red alga) protein is Glutamine--fructose-6-phosphate aminotransferase [isomerizing].